A 487-amino-acid chain; its full sequence is MLMQTEIIAQLVLILPEILIALGIMALLLIGVYSGAHSYLTVTGLTIALLFATIILIVLFPKDGFFYTNALIIDAFSRYMKILTLIGALFSLILSVGFSSSQKFDIFEFPILVLLATLGMMLMISSGNMLSLYMGLELQSLALYVLAAIHRDNVKSSEAGIKYFVLGALSSGLLLYGISLLYGFTGQIGFREISSALNGNILHLGVIFGIVFILAGLAFKISAVPFHMWTPDVYEGAPTPITAFFAGAPKIAAMALIIRVIVFAFIPLESSDNFMPAWQQILIFMAISSMALGAFAAIGQTNIKRLMAYSSIGHMGYALVGLAAGNILGVKGILIYMTIYLGMTIGSFAFILGMRFSNRYVENIYDLAGLVKTNPFMAIVMTIQLFSLASIPPMAGFFGKWYTFSAAVRAGLVPLAIVGMVLSVIGAFYYLRIIKIMWFDDAKDSFVILSNEIKLCLCLSALFVLFYVFFGFWFSEFAEKAATSLFQ.

14 helical membrane passes run 12 to 32, 40 to 60, 79 to 99, 104 to 124, 129 to 149, 164 to 184, 201 to 221, 248 to 268, 281 to 301, 310 to 330, 332 to 352, 378 to 398, 411 to 431, and 455 to 475; these read VLIL…LIGV, LTVT…IVLF, YMKI…VGFS, FDIF…MLMI, MLSL…LAAI, FVLG…LYGF, ILHL…AFKI, APKI…FIPL, ILIF…IGQT, SSIG…ILGV, GILI…AFIL, AIVM…AGFF, GLVP…FYYL, and LCLC…FWFS.

The protein belongs to the complex I subunit 2 family. NDH-1 is composed of 14 different subunits. Subunits NuoA, H, J, K, L, M, N constitute the membrane sector of the complex.

The protein resides in the cell inner membrane. The catalysed reaction is a quinone + NADH + 5 H(+)(in) = a quinol + NAD(+) + 4 H(+)(out). Its function is as follows. NDH-1 shuttles electrons from NADH, via FMN and iron-sulfur (Fe-S) centers, to quinones in the respiratory chain. The immediate electron acceptor for the enzyme in this species is believed to be ubiquinone. Couples the redox reaction to proton translocation (for every two electrons transferred, four hydrogen ions are translocated across the cytoplasmic membrane), and thus conserves the redox energy in a proton gradient. The sequence is that of NADH-quinone oxidoreductase subunit N from Bartonella bacilliformis (strain ATCC 35685 / KC583 / Herrer 020/F12,63).